The sequence spans 331 residues: MCSIQIIGAQSIGVCYGKAANNLPSDQDVINLYNANGIRKLRIYYPDKNIFKALNGSNIEIILGVPNQDLEALANSSIANGWVQDNIRSHFPYVKFKYISIGNKVSPTNNDQYSEFLLQAMKNVYNALAAAGLQDMIKVSTVTYSGVLANTYPPERSIFREEFKSFINPIIQFLARNNLPLLANVYPYFVHVSNTADVSLSYALFTQQGTNSAGYQNLFDAILDSMYFAVEKAGGPNVEIIVSESGWPSEGSSAATIENAQTYYRNLINHVKSGAGTPKKPGKTIETYLFAMFDENDKIGEITEKHFGLFSPDQRAKYQLNFNYLPIYILR.

The signal sequence occupies residues 1-9 (MCSIQIIGA). At Gln-10 the chain carries Pyrrolidone carboxylic acid. N-linked (GlcNAc...) asparagine glycosylation is found at Asn-55 and Asn-75. Glu-244 (nucleophile) is an active-site residue.

This sequence belongs to the glycosyl hydrolase 17 family. As to expression, is expressed primarily in epidermal cell of healthy plant, and following induction by ethylene, accumulates in mesophyll cells.

The protein localises to the secreted. Its subcellular location is the extracellular space. The catalysed reaction is Hydrolysis of (1-&gt;3)-beta-D-glucosidic linkages in (1-&gt;3)-beta-D-glucans.. Is thought to be an important plant defense-related product against fungal pathogens. The polypeptide is Glucan endo-1,3-beta-glucosidase, acidic isoform GL161 (Nicotiana tabacum (Common tobacco)).